Reading from the N-terminus, the 482-residue chain is Iroquois-class homeodomain protein irx-5 (482 aa).

A DNA-binding region (homeobox) is located at residues 109 to 171; it reads DPAYRKNATR…NARRRLKKEN (63 aa). 2 disordered regions span residues 173–307 and 462–482; these read MTWT…HQSH and QSQA…MSSI. Over residues 182 to 198 the composition is skewed to acidic residues; the sequence is EDEEDDENIDLEKNEED. Positions 199–256 are enriched in basic and acidic residues; the sequence is DPRKLEEKGDQDGDAGDQKRSPSAVDFDRLEGEVRQGKELDQTRSDSEQNEVEERNDL. Positions 264 to 273 are enriched in pro residues; the sequence is PTSPLCPPDQ. Residues 284-305 are compositionally biased toward basic residues; it reads HRHTVHNHHHQSIQQLHHHSHQ. Basic and acidic residues predominate over residues 467–482; the sequence is LNKDTPYEMKKGMSSI.

Belongs to the TALE/IRO homeobox family. Expressed in the neural plate in overlapping patterns with other irx members, which all share an anterior border of expression. Broadly expressed in the tailbud rhombencephalon (hindbrain). Outside the nervous system and at tailbud stages, expressed in the developing otic vesicle and branchial arches.

It localises to the nucleus. Its function is as follows. Acts partially redundantly with other irx members in neural patterning. Required for formation of the posterior forebrain, midbrain, hindbrain, and to a lesser extent, spinal cord. Patterns the neuroectoderm in both the anterior/posterior and dorsal/ventral axes. Does not appear to play a role in pronephros kidney development. Involved in craniofacial and gonadal development. Modulates the migration of progenitor cell populations in branchial arches and gonads by repressing CXCL12. In Xenopus tropicalis (Western clawed frog), this protein is Iroquois-class homeodomain protein irx-5.